The chain runs to 612 residues: Glutamine--fructose-6-phosphate aminotransferase [isomerizing] (612 aa).

Cysteine 2 serves as the catalytic Nucleophile; for GATase activity. One can recognise a Glutamine amidotransferase type-2 domain in the interval 2 to 221 (CGIVGIVSQR…NGDIAEITNS (220 aa)). SIS domains are found at residues 289–429 (FNKT…IRKI) and 461–602 (LVKN…VDHP). The For Fru-6P isomerization activity role is filled by lysine 607.

Homodimer.

The protein localises to the cytoplasm. The enzyme catalyses D-fructose 6-phosphate + L-glutamine = D-glucosamine 6-phosphate + L-glutamate. Its function is as follows. Catalyzes the first step in hexosamine metabolism, converting fructose-6P into glucosamine-6P using glutamine as a nitrogen source. This Wigglesworthia glossinidia brevipalpis protein is Glutamine--fructose-6-phosphate aminotransferase [isomerizing].